Consider the following 141-residue polypeptide: Pyrophosphate-energized proton pump (141 aa).

A run of 3 helical transmembrane segments spans residues 11–31 (GLIA…TLTV), 46–66 (GTNL…IVVI), and 121–141 (LAGL…AGMI).

It belongs to the H(+)-translocating pyrophosphatase (TC 3.A.10) family. In terms of assembly, homodimer. Mg(2+) is required as a cofactor.

The protein localises to the cell inner membrane. It catalyses the reaction diphosphate + H2O + H(+)(in) = 2 phosphate + 2 H(+)(out). Functionally, proton pump that utilizes the energy of pyrophosphate hydrolysis as the driving force for proton movement across the membrane. Generates a proton motive force. This chain is Pyrophosphate-energized proton pump (hppA), found in Anaplasma marginale.